The chain runs to 213 residues: Achelase-1 (213 aa).

Residues 1–213 (IVGGSVTTIG…RYTSWIQSNA (213 aa)) enclose the Peptidase S1 domain. The cysteines at positions 26 and 42 are disulfide-linked. Active-site charge relay system residues include histidine 41 and aspartate 86. Cysteine 155 and cysteine 172 are disulfide-bonded. The Charge relay system role is filled by serine 188.

Belongs to the peptidase S1 family. Hemolymph and saliva of the larval form (caterpillar).

Its subcellular location is the secreted. The protein resides in the extracellular space. With respect to regulation, sensitive to serine proteinase inhibitors and thiol proteinase inhibitors. In terms of biological role, fibrinolytic activity; shows preferential cleavage of Arg-Gly bonds in all three fibrinogen chains. Contact with the caterpillars causes severe bleeding, due the anticoagulant effect of the protein. This Lonomia achelous (Giant silkworm moth) protein is Achelase-1.